We begin with the raw amino-acid sequence, 580 residues long: Amino-acid acetyltransferase, mitochondrial (580 aa).

Positions 403-560 (LTMQNLFDDK…NPRHKNGVVN (158 aa)) constitute an N-acetyltransferase domain.

This sequence belongs to the acetyltransferase family.

The protein resides in the mitochondrion. It carries out the reaction L-glutamate + acetyl-CoA = N-acetyl-L-glutamate + CoA + H(+). It functions in the pathway amino-acid biosynthesis; L-arginine biosynthesis; N(2)-acetyl-L-ornithine from L-glutamate: step 1/4. In terms of biological role, N-acetylglutamate synthase involved in arginine biosynthesis. In Candida dubliniensis (strain CD36 / ATCC MYA-646 / CBS 7987 / NCPF 3949 / NRRL Y-17841) (Yeast), this protein is Amino-acid acetyltransferase, mitochondrial (ARG2).